Consider the following 66-residue polypeptide: Ocellatin-PT1 (66 aa).

Residues 1–22 form the signal peptide; that stretch reads MAFLKKSLFLVLFLGLVSLSIC. The propeptide occupies 23–39; it reads DEEKRQDEDDDDDDDEE. The residue at position 66 (Val-66) is a Valine amide.

As to expression, expressed by the skin glands.

It is found in the secreted. In terms of biological role, has antibacterial activity against Gram-negative bacterium E.coli ATCC 25922 (MIC=300 uM) but not against S.pneumoniae ATCC 700603, S.choleraesuis ATCC 14028 or Gram-positive bacterium S.aureus ATCC 29313. Shows virtually no hemolytic activity and no cytotoxicity. The polypeptide is Ocellatin-PT1 (Leptodactylus pustulatus (Ceara white-lipped frog)).